We begin with the raw amino-acid sequence, 173 residues long: Large ribosomal subunit protein uL10 (173 aa).

This sequence belongs to the universal ribosomal protein uL10 family. Part of the ribosomal stalk of the 50S ribosomal subunit. The N-terminus interacts with L11 and the large rRNA to form the base of the stalk. The C-terminus forms an elongated spine to which L12 dimers bind in a sequential fashion forming a multimeric L10(L12)X complex.

Its function is as follows. Forms part of the ribosomal stalk, playing a central role in the interaction of the ribosome with GTP-bound translation factors. This is Large ribosomal subunit protein uL10 from Beutenbergia cavernae (strain ATCC BAA-8 / DSM 12333 / CCUG 43141 / JCM 11478 / NBRC 16432 / NCIMB 13614 / HKI 0122).